A 352-amino-acid chain; its full sequence is 4-hydroxy-2-oxovalerate aldolase (352 aa).

A Pyruvate carboxyltransferase domain is found at V14–A266. R22–D23 lines the substrate pocket. D23 lines the Mn(2+) pocket. The active-site Proton acceptor is H26. Substrate is bound by residues S176 and H205. Mn(2+) contacts are provided by H205 and H207. Substrate is bound at residue Y296.

It belongs to the 4-hydroxy-2-oxovalerate aldolase family.

It catalyses the reaction (S)-4-hydroxy-2-oxopentanoate = acetaldehyde + pyruvate. This Mycolicibacterium gilvum (strain PYR-GCK) (Mycobacterium gilvum (strain PYR-GCK)) protein is 4-hydroxy-2-oxovalerate aldolase.